A 354-amino-acid chain; its full sequence is Uroporphyrinogen decarboxylase (354 aa).

Substrate is bound by residues 27–31 (RQAGR), D77, Y154, T209, and H327.

Belongs to the uroporphyrinogen decarboxylase family. In terms of assembly, homodimer.

It localises to the cytoplasm. It carries out the reaction uroporphyrinogen III + 4 H(+) = coproporphyrinogen III + 4 CO2. The protein operates within porphyrin-containing compound metabolism; protoporphyrin-IX biosynthesis; coproporphyrinogen-III from 5-aminolevulinate: step 4/4. Functionally, catalyzes the decarboxylation of four acetate groups of uroporphyrinogen-III to yield coproporphyrinogen-III. In Escherichia coli O7:K1 (strain IAI39 / ExPEC), this protein is Uroporphyrinogen decarboxylase.